The following is a 221-amino-acid chain: Probable glutathione S-transferase (221 aa).

Positions 4–83 constitute a GST N-terminal domain; that stretch reads EEVILLDFWP…YIEEVWKDKA (80 aa). Residues serine 14, lysine 41, isoleucine 55, and 67 to 68 each bind glutathione; that span reads ES. Positions 90–214 constitute a GST C-terminal domain; sequence DPYDRAQARF…PKVLEFVKVL (125 aa).

It belongs to the GST superfamily. HSP26 family. In terms of tissue distribution, root tip-specific expression.

The catalysed reaction is RX + glutathione = an S-substituted glutathione + a halide anion + H(+). The sequence is that of Probable glutathione S-transferase from Nicotiana tabacum (Common tobacco).